The chain runs to 223 residues: Lipoprotein-releasing system ATP-binding protein LolD (223 aa).

Residues 1-223 (MAKVFRSGST…DEVEPQSLPA (223 aa)) form the ABC transporter domain. 32 to 39 (GDSGSGKS) provides a ligand contact to ATP.

This sequence belongs to the ABC transporter superfamily. Lipoprotein translocase (TC 3.A.1.125) family. The complex is composed of two ATP-binding proteins (LolD) and two transmembrane proteins (LolC and LolE).

The protein localises to the cell inner membrane. Functionally, part of the ABC transporter complex LolCDE involved in the translocation of mature outer membrane-directed lipoproteins, from the inner membrane to the periplasmic chaperone, LolA. Responsible for the formation of the LolA-lipoprotein complex in an ATP-dependent manner. The protein is Lipoprotein-releasing system ATP-binding protein LolD of Koribacter versatilis (strain Ellin345).